We begin with the raw amino-acid sequence, 72 residues long: MLNPPLNQLTSQIKSKYLIATTAAKRAREIDEQPETELLSEYHSFKPVGRALEEIADGKIRPVISSDYYGKE.

This sequence belongs to the RNA polymerase subunit omega family. As to quaternary structure, the RNAP catalytic core consists of 2 alpha, 1 beta, 1 beta' and 1 omega subunit. When a sigma factor is associated with the core the holoenzyme is formed, which can initiate transcription.

It carries out the reaction RNA(n) + a ribonucleoside 5'-triphosphate = RNA(n+1) + diphosphate. Functionally, promotes RNA polymerase assembly. Latches the N- and C-terminal regions of the beta' subunit thereby facilitating its interaction with the beta and alpha subunits. This is DNA-directed RNA polymerase subunit omega from Staphylococcus aureus (strain Mu3 / ATCC 700698).